Consider the following 224-residue polypeptide: DNA repair and recombination protein RadB (224 aa).

This sequence belongs to the eukaryotic RecA-like protein family. RadB subfamily.

Involved in DNA repair and in homologous recombination. May regulate the cleavage reactions of the branch-structured DNA. Has a very weak ATPase activity that is not stimulated by DNA. Binds DNA but does not promote DNA strands exchange. This chain is DNA repair and recombination protein RadB, found in Methanoculleus marisnigri (strain ATCC 35101 / DSM 1498 / JR1).